The chain runs to 147 residues: Angiogenin (147 aa).

Positions 1-24 are cleaved as a signal peptide; sequence MVILLGPLLLVFMLGLGLAPLSLA. Histidine 37 serves as the catalytic Proton acceptor. 2 residues coordinate tRNA: arginine 45 and aspartate 46. Cystine bridges form between cysteine 50-cysteine 104, cysteine 63-cysteine 115, and cysteine 81-cysteine 130. Residues 55–59 carry the Nucleolar localization signal motif; the sequence is KQRGL. Residues cysteine 104 and isoleucine 126 each contribute to the tRNA site. Catalysis depends on histidine 137, which acts as the Proton donor.

This sequence belongs to the pancreatic ribonuclease family. In terms of assembly, homodimer. Interacts with RNH1; inhibiting ANG ribonuclease activity. Interacts with PCNA.

Its subcellular location is the secreted. The protein localises to the nucleus. The protein resides in the nucleolus. It is found in the cytoplasm. It localises to the stress granule. Has weak tRNA ribonuclease activity by itself due to partial autoinhibition by its C-terminus, which folds into a short alpha-helix that partially occludes the substrate-binding site. In absence of stress, the ribonuclease activity is inhibited by RNH1 in the cytoplasm. In response to stress, dissociates from RNH1 in the cytoplasm and associates with cytoplasmic ribosomes with vacant A-sites: ribosomes directly activate the tRNA ribonuclease activity of ANG by refolding the C-terminal alpha-helix. In response to stress, the angiogenic activity of ANG is inhibited by RNH1 in the nucleus. In terms of biological role, secreted ribonuclease that can either promote or restrict cell proliferation of target cells, depending on the context. Endocytosed in target cells via its receptor PLXNB2 and translocates to the cytoplasm or nucleus. Under stress conditions, localizes to the cytoplasm and promotes the assembly of stress granules (SGs): specifically cleaves a subset of tRNAs within anticodon loops to produce tRNA-derived stress-induced fragments (tiRNAs), resulting in translation repression and inhibition of cell proliferation. tiRNas also prevent formation of apoptosome, thereby promoting cell survival. Preferentially cleaves RNAs between a pyrimidine and an adenosine residue, suggesting that it cleaves the anticodon loop of tRNA(Ala) (32-UUAGCAU-38) after positions 33 and 36. Cleaves a subset of tRNAs, including tRNA(Ala), tRNA(Glu), tRNA(Gly), tRNA(Lys), tRNA(Val), tRNA(His), tRNA(Asp) and tRNA(Sec). Under growth conditions and in differentiated cells, translocates to the nucleus and stimulates ribosomal RNA (rRNA) transcription, including that containing the initiation site sequences of 45S rRNA, thereby promoting cell growth and proliferation. Angiogenin induces vascularization of normal and malignant tissues via its ability to promote rRNA transcription. Involved in hematopoietic stem and progenitor cell (HSPC) growth and survival by promoting rRNA transcription in growth conditions and inhibiting translation in response to stress, respectively. Mediates the crosstalk between myeloid and intestinal epithelial cells to protect the intestinal epithelial barrier integrity: secreted by myeloid cells and promotes intestinal epithelial cells proliferation and survival. Also mediates osteoclast-endothelial cell crosstalk in growing bone: produced by osteoclasts and protects the neighboring vascular cells against senescence by promoting rRNA transcription. The sequence is that of Angiogenin (ANG) from Sus scrofa (Pig).